Reading from the N-terminus, the 257-residue chain is 3-methyl-2-oxobutanoate hydroxymethyltransferase (257 aa).

Mg(2+)-binding residues include aspartate 44 and aspartate 83. 3-methyl-2-oxobutanoate is bound by residues 44 to 45 (DS), aspartate 83, and lysine 113. Glutamate 115 provides a ligand contact to Mg(2+). Residue glutamate 182 is the Proton acceptor of the active site.

The protein belongs to the PanB family. In terms of assembly, homodecamer; pentamer of dimers. It depends on Mg(2+) as a cofactor.

The protein localises to the cytoplasm. The catalysed reaction is 3-methyl-2-oxobutanoate + (6R)-5,10-methylene-5,6,7,8-tetrahydrofolate + H2O = 2-dehydropantoate + (6S)-5,6,7,8-tetrahydrofolate. Its pathway is cofactor biosynthesis; (R)-pantothenate biosynthesis; (R)-pantoate from 3-methyl-2-oxobutanoate: step 1/2. Functionally, catalyzes the reversible reaction in which hydroxymethyl group from 5,10-methylenetetrahydrofolate is transferred onto alpha-ketoisovalerate to form ketopantoate. The protein is 3-methyl-2-oxobutanoate hydroxymethyltransferase of Rippkaea orientalis (strain PCC 8801 / RF-1) (Cyanothece sp. (strain PCC 8801)).